The primary structure comprises 468 residues: Glutamate--tRNA ligase 2 (468 aa).

A 'HIGH' region motif is present at residues 9-19; sequence PSPTGFLHIGG. Positions 238-242 match the 'KMSKS' region motif; the sequence is KLSKR. K241 contributes to the ATP binding site.

The protein belongs to the class-I aminoacyl-tRNA synthetase family. Glutamate--tRNA ligase type 1 subfamily. Monomer.

It is found in the cytoplasm. It catalyses the reaction tRNA(Glu) + L-glutamate + ATP = L-glutamyl-tRNA(Glu) + AMP + diphosphate. In terms of biological role, catalyzes the attachment of glutamate to tRNA(Glu) in a two-step reaction: glutamate is first activated by ATP to form Glu-AMP and then transferred to the acceptor end of tRNA(Glu). This is Glutamate--tRNA ligase 2 from Rhodospirillum rubrum (strain ATCC 11170 / ATH 1.1.1 / DSM 467 / LMG 4362 / NCIMB 8255 / S1).